We begin with the raw amino-acid sequence, 401 residues long: Insertion element ISM1 uncharacterized 48.3 kDa protein (401 aa).

Functionally, this polypeptide is involved in transposition, and should therefore bind to nucleic acids. The chain is Insertion element ISM1 uncharacterized 48.3 kDa protein from Methanobrevibacter smithii.